We begin with the raw amino-acid sequence, 443 residues long: Pyrrolysine--tRNA ligase (443 aa).

The interval 103–177 is disordered; that stretch reads VRKAMPKSVA…PAAPVPTSAP (75 aa). Residues 131–177 are compositionally biased toward low complexity; the sequence is PAPATPVSAPAQAPAPSTGSASATSASAQRMANSAAAPAAPVPTSAP.

It belongs to the class-II aminoacyl-tRNA synthetase family.

The protein resides in the cytoplasm. The catalysed reaction is tRNA(Pyl) + L-pyrrolysine + ATP = L-pyrrolysyl-tRNA(Pyl) + AMP + diphosphate. Functionally, catalyzes the attachment of pyrrolysine to tRNA(Pyl). Pyrrolysine is a lysine derivative encoded by the termination codon UAG. This chain is Pyrrolysine--tRNA ligase, found in Methanosarcina acetivorans (strain ATCC 35395 / DSM 2834 / JCM 12185 / C2A).